The following is a 227-amino-acid chain: Cytochrome c oxidase subunit 2 (227 aa).

The Mitochondrial intermembrane portion of the chain corresponds to 1-14 (MALPFQLGFQDATS). The helical transmembrane segment at 15-45 (PIMEELLHFHDHTLMIVFMISSLVLYLISSM) threads the bilayer. Residues 46 to 59 (LTTRLTHTSTMDAQ) lie on the Mitochondrial matrix side of the membrane. The chain crosses the membrane as a helical span at residues 60-87 (EVETIWTILPAIILITIALPSLRILYMM). At 88–227 (DEINNPSMTI…CFEKWSTSML (140 aa)) the chain is on the mitochondrial intermembrane side. Cu cation contacts are provided by H161, C196, E198, C200, H204, and M207. E198 provides a ligand contact to Mg(2+).

The protein belongs to the cytochrome c oxidase subunit 2 family. Component of the cytochrome c oxidase (complex IV, CIV), a multisubunit enzyme composed of 14 subunits. The complex is composed of a catalytic core of 3 subunits MT-CO1, MT-CO2 and MT-CO3, encoded in the mitochondrial DNA, and 11 supernumerary subunits COX4I, COX5A, COX5B, COX6A, COX6B, COX6C, COX7A, COX7B, COX7C, COX8 and NDUFA4, which are encoded in the nuclear genome. The complex exists as a monomer or a dimer and forms supercomplexes (SCs) in the inner mitochondrial membrane with NADH-ubiquinone oxidoreductase (complex I, CI) and ubiquinol-cytochrome c oxidoreductase (cytochrome b-c1 complex, complex III, CIII), resulting in different assemblies (supercomplex SCI(1)III(2)IV(1) and megacomplex MCI(2)III(2)IV(2)). Found in a complex with TMEM177, COA6, COX18, COX20, SCO1 and SCO2. Interacts with TMEM177 in a COX20-dependent manner. Interacts with COX20. Interacts with COX16. The cofactor is Cu cation.

It localises to the mitochondrion inner membrane. It catalyses the reaction 4 Fe(II)-[cytochrome c] + O2 + 8 H(+)(in) = 4 Fe(III)-[cytochrome c] + 2 H2O + 4 H(+)(out). Component of the cytochrome c oxidase, the last enzyme in the mitochondrial electron transport chain which drives oxidative phosphorylation. The respiratory chain contains 3 multisubunit complexes succinate dehydrogenase (complex II, CII), ubiquinol-cytochrome c oxidoreductase (cytochrome b-c1 complex, complex III, CIII) and cytochrome c oxidase (complex IV, CIV), that cooperate to transfer electrons derived from NADH and succinate to molecular oxygen, creating an electrochemical gradient over the inner membrane that drives transmembrane transport and the ATP synthase. Cytochrome c oxidase is the component of the respiratory chain that catalyzes the reduction of oxygen to water. Electrons originating from reduced cytochrome c in the intermembrane space (IMS) are transferred via the dinuclear copper A center (CU(A)) of subunit 2 and heme A of subunit 1 to the active site in subunit 1, a binuclear center (BNC) formed by heme A3 and copper B (CU(B)). The BNC reduces molecular oxygen to 2 water molecules using 4 electrons from cytochrome c in the IMS and 4 protons from the mitochondrial matrix. In Phyllostomus hastatus (Greater spear-nosed bat), this protein is Cytochrome c oxidase subunit 2 (MT-CO2).